The sequence spans 178 residues: Protein GrpE (178 aa).

Positions 1–11 are enriched in polar residues; sequence MENTQENPTDQ. The interval 1–31 is disordered; it reads MENTQENPTDQTTEETGREAQAAENAAPAAE. The segment covering 19–31 has biased composition (low complexity); the sequence is EAQAAENAAPAAE.

It belongs to the GrpE family. As to quaternary structure, homodimer.

The protein localises to the cytoplasm. In terms of biological role, participates actively in the response to hyperosmotic and heat shock by preventing the aggregation of stress-denatured proteins, in association with DnaK and GrpE. It is the nucleotide exchange factor for DnaK and may function as a thermosensor. Unfolded proteins bind initially to DnaJ; upon interaction with the DnaJ-bound protein, DnaK hydrolyzes its bound ATP, resulting in the formation of a stable complex. GrpE releases ADP from DnaK; ATP binding to DnaK triggers the release of the substrate protein, thus completing the reaction cycle. Several rounds of ATP-dependent interactions between DnaJ, DnaK and GrpE are required for fully efficient folding. The chain is Protein GrpE from Burkholderia thailandensis (strain ATCC 700388 / DSM 13276 / CCUG 48851 / CIP 106301 / E264).